The primary structure comprises 51 residues: Protein SspM (51 aa).

The protein belongs to the alpha/beta-type SASP family.

This chain is Protein SspM (sspM), found in Mycolicibacterium phlei (Mycobacterium phlei).